The following is a 318-amino-acid chain: C1GALT1-specific chaperone 1 (318 aa).

The Cytoplasmic portion of the chain corresponds to 1 to 6; it reads MLSESS. Residues 7–26 traverse the membrane as a helical; Signal-anchor for type II membrane protein segment; sequence SFLKGVMLGSIFCALITMLG. The Lumenal segment spans residues 27 to 318; the sequence is HIRIGHGSRM…FLPPNGSDND (292 aa).

It belongs to the glycosyltransferase 31 family. Beta3-Gal-T subfamily. In terms of assembly, associates with core 1 beta-3-galactosyltransferase (C1GALT1), probably not with the soluble active form.

The protein resides in the membrane. Its function is as follows. Probable chaperone required for the generation of 1 O-glycan Gal-beta1-3GalNAc-alpha1-Ser/Thr (T antigen), which is a precursor for many extended O-glycans in glycoproteins. Probably acts as a specific molecular chaperone assisting the folding/stability of core 1 beta-3-galactosyltransferase (C1GALT1). This is C1GALT1-specific chaperone 1 (C1GALT1C1) from Bos taurus (Bovine).